Reading from the N-terminus, the 70-residue chain is DNA-directed RNA polymerase subunit epsilon (70 aa).

The protein belongs to the RNA polymerase subunit epsilon family. As to quaternary structure, RNAP is composed of a core of 2 alpha, a beta and a beta' subunit. The core is associated with a delta subunit, and at least one of epsilon or omega. When a sigma factor is associated with the core the holoenzyme is formed, which can initiate transcription.

The catalysed reaction is RNA(n) + a ribonucleoside 5'-triphosphate = RNA(n+1) + diphosphate. A non-essential component of RNA polymerase (RNAP). In Bacillus cereus (strain ZK / E33L), this protein is DNA-directed RNA polymerase subunit epsilon.